The chain runs to 740 residues: Alpha-1,6-mannosylglycoprotein 6-beta-N-acetylglucosaminyltransferase A (740 aa).

Topologically, residues methionine 1–lysine 13 are cytoplasmic. A helical; Signal-anchor for type II membrane protein membrane pass occupies residues leucine 14–leucine 30. Residues histidine 31–leucine 740 lie on the Lumenal side of the membrane. N-linked (GlcNAc...) asparagine glycosylation is found at asparagine 109, asparagine 114, and asparagine 117. Intrachain disulfides connect cysteine 144–cysteine 182, cysteine 155–cysteine 195, cysteine 171–cysteine 337, cysteine 371–cysteine 625, cysteine 648–cysteine 723, cysteine 652–cysteine 725, cysteine 659–cysteine 712, cysteine 680–cysteine 701, and cysteine 736–cysteine 739. Residues asparagine 212–leucine 740 are sufficient for catalytic activity. N-linked (GlcNAc...) asparagine glycosylation occurs at asparagine 333. Residue aspartate 377–serine 378 coordinates substrate. Residues asparagine 432 and asparagine 446 are each glycosylated (N-linked (GlcNAc...) asparagine). Residue glutamate 525 coordinates UDP-N-acetyl-alpha-D-glucosamine. Residue lysine 553 coordinates substrate.

It belongs to the glycosyltransferase 18 family. In terms of processing, N-glycosylated. Post-translationally, a secreted form is released from the membrane after cleavage by gamma-secretase.

Its subcellular location is the golgi apparatus membrane. It is found in the secreted. The enzyme catalyses N(4)-{beta-D-GlcNAc-(1-&gt;2)-[beta-D-GlcNAc-(1-&gt;4)]-alpha-D-Man-(1-&gt;3)-[beta-D-GlcNAc-(1-&gt;2)-alpha-D-Man-(1-&gt;6)]-beta-D-Man-(1-&gt;4)-beta-D-GlcNAc-(1-&gt;4)-beta-D-GlcNAc}-L-asparaginyl-[protein] + UDP-N-acetyl-alpha-D-glucosamine = N(4)-{beta-D-GlcNAc-(1-&gt;2)-[beta-D-GlcNAc-(1-&gt;4)]-alpha-D-Man-(1-&gt;3)-[beta-D-GlcNAc-(1-&gt;2)-[beta-D-GlcNAc-(1-&gt;6)]-alpha-D-Man-(1-&gt;6)]-beta-D-Man-(1-&gt;4)-beta-D-GlcNAc-(1-&gt;4)-beta-D-GlcNAc}-L-asparaginyl-[protein] + UDP + H(+). It participates in protein modification; protein glycosylation. Its function is as follows. Catalyzes the addition of N-acetylglucosamine (GlcNAc) in beta 1-6 linkage to the alpha-linked mannose of biantennary N-linked oligosaccharides. Catalyzes an important step in the biosynthesis of branched, complex-type N-glycans, such as those found on EGFR, TGFR (TGF-beta receptor) and CDH2. Via its role in the biosynthesis of complex N-glycans, plays an important role in the activation of cellular signaling pathways, reorganization of the actin cytoskeleton, cell-cell adhesion and cell migration. MGAT5-dependent EGFR N-glycosylation enhances the interaction between EGFR and LGALS3 and thereby prevents rapid EGFR endocytosis and prolongs EGFR signaling. Required for efficient interaction between TGFB1 and its receptor. Enhances activation of intracellular signaling pathways by several types of growth factors, including FGF2, PDGF, IGF, TGFB1 and EGF. MGAT5-dependent CDH2 N-glycosylation inhibits CDH2-mediated homotypic cell-cell adhesion and contributes to the regulation of downstream signaling pathways. Promotes cell migration. Contributes to the regulation of the inflammatory response. MGAT5-dependent TCR N-glycosylation enhances the interaction between TCR and LGALS3, limits agonist-induced TCR clustering, and thereby dampens TCR-mediated responses to antigens. Required for normal leukocyte evasation and accumulation at sites of inflammation. Inhibits attachment of monocytes to the vascular endothelium and subsequent monocyte diapedesis. In terms of biological role, promotes proliferation of umbilical vein endothelial cells and angiogenesis, at least in part by promoting the release of the growth factor FGF2 from the extracellular matrix. The chain is Alpha-1,6-mannosylglycoprotein 6-beta-N-acetylglucosaminyltransferase A (MGAT5) from Cricetulus griseus (Chinese hamster).